Here is a 154-residue protein sequence, read N- to C-terminus: Deoxyuridine 5'-triphosphate nucleotidohydrolase (154 aa).

Residues 74–76 (RSG), N87, 91–93 (TID), and K101 contribute to the substrate site.

The protein belongs to the dUTPase family. Mg(2+) serves as cofactor.

The catalysed reaction is dUTP + H2O = dUMP + diphosphate + H(+). The protein operates within pyrimidine metabolism; dUMP biosynthesis; dUMP from dCTP (dUTP route): step 2/2. This enzyme is involved in nucleotide metabolism: it produces dUMP, the immediate precursor of thymidine nucleotides and it decreases the intracellular concentration of dUTP so that uracil cannot be incorporated into DNA. The polypeptide is Deoxyuridine 5'-triphosphate nucleotidohydrolase (Cytophaga hutchinsonii (strain ATCC 33406 / DSM 1761 / CIP 103989 / NBRC 15051 / NCIMB 9469 / D465)).